The primary structure comprises 609 residues: Protein tesmin/TSO1-like CXC 3 (609 aa).

Over residues E69 to V84 the composition is skewed to basic and acidic residues. Disordered regions lie at residues E69–D102, P307–K328, L457–Q477, and N569–H609. The CRC domain occupies S326–G451. The segment covering T466–Q477 has biased composition (polar residues).

This sequence belongs to the lin-54 family. As to expression, ubiquitous but expressed mostly in flowers and at significant levels in leaves. Detected with highest levels in developing ovules and microspores, and in petals.

The protein resides in the nucleus. Functionally, plays a role in development of both male and female reproductive tissues. This is Protein tesmin/TSO1-like CXC 3 (TCX3) from Arabidopsis thaliana (Mouse-ear cress).